A 324-amino-acid chain; its full sequence is Glyoxylate/hydroxypyruvate reductase B (324 aa).

Residues Arg-237 and Glu-266 contribute to the active site. Catalysis depends on His-285, which acts as the Proton donor.

This sequence belongs to the D-isomer specific 2-hydroxyacid dehydrogenase family. GhrB subfamily. As to quaternary structure, homodimer.

The protein resides in the cytoplasm. The catalysed reaction is glycolate + NADP(+) = glyoxylate + NADPH + H(+). The enzyme catalyses (R)-glycerate + NAD(+) = 3-hydroxypyruvate + NADH + H(+). It catalyses the reaction (R)-glycerate + NADP(+) = 3-hydroxypyruvate + NADPH + H(+). Functionally, catalyzes the NADPH-dependent reduction of glyoxylate and hydroxypyruvate into glycolate and glycerate, respectively. This Escherichia coli O6:K15:H31 (strain 536 / UPEC) protein is Glyoxylate/hydroxypyruvate reductase B.